Consider the following 635-residue polypeptide: Moesin/ezrin/radixin homolog 2 (635 aa).

An FERM domain is found at 12 to 305; that stretch reads LSVRVSTFDS…GNHDLYMRRR (294 aa).

As to quaternary structure, interacts with Moe and arm at the adherens junction. Forms a complex with Kibra and Ex. Interacts (via FERM domain) with Sav (via FBM motif). Interacts with Schip1. Expressed predominantly in the germline. Expressed in the developing oocyte from stage 6 to the end of oogenesis and in the apical ends of follical cells from stage 10. Ubiquitous expression throughout embryogenesis with enhanced expression in mesoderm of early embryos and midgut of late embryos. In embryonic CNS, expression is seen in neuropil and developing brain and is enhanced in neuronal cell bodies. In embryonic PNS, expression is seen within the cell body. In third instar larvae, expression is uniform in the eye imaginal disk and is enhanced at the morphogenetic furrow. In pupal eyes, expression is seen in the cytoplasm of secondary and tertiary pigment cells, bristle precursor cells and rhabdomeres.

Its subcellular location is the cell junction. The protein resides in the adherens junction. It is found in the cell membrane. The protein localises to the cytoplasm. It localises to the cytoskeleton. Its subcellular location is the apical cell membrane. The protein resides in the cell projection. It is found in the rhabdomere. Regulator of the Hippo/SWH (Sav/Wts/Hpo) signaling pathway, a signaling pathway that plays a pivotal role in organ size control and tumor suppression by restricting proliferation and promoting apoptosis. The core of this pathway is composed of a kinase cascade wherein Hippo (Hpo), in complex with its regulatory protein Salvador (Sav), phosphorylates and activates Warts (Wts) in complex with its regulatory protein Mats, which in turn phosphorylates and inactivates the Yorkie (Yki) oncoprotein. Mer acts synergistically along with Ex and Kibra to regulate the Hippo signaling pathway. This Drosophila melanogaster (Fruit fly) protein is Moesin/ezrin/radixin homolog 2 (Mer).